Here is a 285-residue protein sequence, read N- to C-terminus: Pantothenate synthetase (285 aa).

30–37 (MGNLHDGH) is a binding site for ATP. The active-site Proton donor is H37. (R)-pantoate is bound at residue Q61. Residue Q61 participates in beta-alanine binding. 148 to 151 (GEKD) contributes to the ATP binding site. (R)-pantoate is bound at residue Q154. Position 185–188 (185–188 (RSSR)) interacts with ATP.

It belongs to the pantothenate synthetase family. Homodimer.

The protein localises to the cytoplasm. It carries out the reaction (R)-pantoate + beta-alanine + ATP = (R)-pantothenate + AMP + diphosphate + H(+). It participates in cofactor biosynthesis; (R)-pantothenate biosynthesis; (R)-pantothenate from (R)-pantoate and beta-alanine: step 1/1. Functionally, catalyzes the condensation of pantoate with beta-alanine in an ATP-dependent reaction via a pantoyl-adenylate intermediate. This chain is Pantothenate synthetase, found in Alcanivorax borkumensis (strain ATCC 700651 / DSM 11573 / NCIMB 13689 / SK2).